A 743-amino-acid chain; its full sequence is Tegument protein UL46 homolog (743 aa).

Disordered stretches follow at residues 437 to 481 (GCPP…VSSA), 522 to 590 (HQRS…SGYM), and 693 to 743 (RVRL…VSSL). A compositionally biased stretch (low complexity) spans 526–552 (DSSSSDNSSCSSTETEYITISSTPSPT). 2 stretches are compositionally biased toward polar residues: residues 573–586 (QPANTVSEYSSPAN) and 697–716 (GTTTPTSANEATEKYTTPSS). Residues 722 to 743 (RTLSTSESPESSPEQQERVSSL) show a composition bias toward low complexity.

This sequence belongs to the herpesviridae HHV-1 VP11/12 protein family. In terms of assembly, interacts with VP16.

It localises to the virion tegument. Its subcellular location is the host cell membrane. Functionally, abundant tegument protein. Trans-activates the immediate early genes. The sequence is that of Tegument protein UL46 homolog from Equus caballus (Horse).